Reading from the N-terminus, the 1015-residue chain is DNA polymerase catalytic subunit (1015 aa).

It belongs to the DNA polymerase type-B family. As to quaternary structure, forms a complex with the major DNA-binding protein BALF2, the DNA polymerase processivity factor BMRF1, and the alkaline exonuclease BGLF5. Interacts with the putative helicase-primase complex composed of BBLF4, BSLF1 and BBLF2/3 proteins; these interactions may coordinate leading and lagging strand DNA synthesis at the replication fork.

It is found in the host nucleus. The catalysed reaction is DNA(n) + a 2'-deoxyribonucleoside 5'-triphosphate = DNA(n+1) + diphosphate. Replicates viral genomic DNA in the late phase of lytic infection, producing long concatemeric DNA. The replication complex is composed of six viral proteins: the DNA polymerase, processivity factor, primase, primase-associated factor, helicase, and ssDNA-binding protein. This is DNA polymerase catalytic subunit from Homo sapiens (Human).